Here is a 163-residue protein sequence, read N- to C-terminus: MLVFGLDPGLNYTGWAVVLKEPSGSLSLLDTGTICTTSCSDLNDKLFCIFSGLSAIIQKFSVSVASIENVFVNLNPKASMFLCYARAASLLACLSSNVKIFEYSPTKIKKCVFGNGRASKEQIAFVVRSSLGLSEDASFSSHASDAIAAALCHIFSSGNRYGI.

Catalysis depends on residues Asp7, Glu68, and His142. Asp7, Glu68, and His142 together coordinate Mg(2+).

Belongs to the RuvC family. Homodimer which binds Holliday junction (HJ) DNA. The HJ becomes 2-fold symmetrical on binding to RuvC with unstacked arms; it has a different conformation from HJ DNA in complex with RuvA. In the full resolvosome a probable DNA-RuvA(4)-RuvB(12)-RuvC(2) complex forms which resolves the HJ. It depends on Mg(2+) as a cofactor.

The protein localises to the cytoplasm. The enzyme catalyses Endonucleolytic cleavage at a junction such as a reciprocal single-stranded crossover between two homologous DNA duplexes (Holliday junction).. The RuvA-RuvB-RuvC complex processes Holliday junction (HJ) DNA during genetic recombination and DNA repair. Endonuclease that resolves HJ intermediates. Cleaves cruciform DNA by making single-stranded nicks across the HJ at symmetrical positions within the homologous arms, yielding a 5'-phosphate and a 3'-hydroxyl group; requires a central core of homology in the junction. The consensus cleavage sequence is 5'-(A/T)TT(C/G)-3'. Cleavage occurs on the 3'-side of the TT dinucleotide at the point of strand exchange. HJ branch migration catalyzed by RuvA-RuvB allows RuvC to scan DNA until it finds its consensus sequence, where it cleaves and resolves the cruciform DNA. The sequence is that of Crossover junction endodeoxyribonuclease RuvC from Anaplasma phagocytophilum (strain HZ).